A 1022-amino-acid chain; its full sequence is Protein translocase subunit SecA (1022 aa).

Residues Gln-143, 161 to 165, and Asp-661 each bind ATP; that span reads GEGKT. The disordered stretch occupies residues 973 to 1001; sequence AGSILSHESDVPSGTAAQQPIKADVKPGR. Cys-1005, Cys-1007, Cys-1016, and His-1017 together coordinate Zn(2+).

The protein belongs to the SecA family. Monomer and homodimer. Part of the essential Sec protein translocation apparatus which comprises SecA, SecYEG and auxiliary proteins SecDF. Other proteins may also be involved. Zn(2+) serves as cofactor.

Its subcellular location is the cell inner membrane. The protein localises to the cytoplasm. It carries out the reaction ATP + H2O + cellular proteinSide 1 = ADP + phosphate + cellular proteinSide 2.. Part of the Sec protein translocase complex. Interacts with the SecYEG preprotein conducting channel. Has a central role in coupling the hydrolysis of ATP to the transfer of proteins into and across the cell membrane, serving as an ATP-driven molecular motor driving the stepwise translocation of polypeptide chains across the membrane. In Chlorobium phaeobacteroides (strain DSM 266 / SMG 266 / 2430), this protein is Protein translocase subunit SecA.